Consider the following 230-residue polypeptide: Leucyl/phenylalanyl-tRNA--protein transferase (230 aa).

Belongs to the L/F-transferase family.

The protein localises to the cytoplasm. The enzyme catalyses N-terminal L-lysyl-[protein] + L-leucyl-tRNA(Leu) = N-terminal L-leucyl-L-lysyl-[protein] + tRNA(Leu) + H(+). It carries out the reaction N-terminal L-arginyl-[protein] + L-leucyl-tRNA(Leu) = N-terminal L-leucyl-L-arginyl-[protein] + tRNA(Leu) + H(+). It catalyses the reaction L-phenylalanyl-tRNA(Phe) + an N-terminal L-alpha-aminoacyl-[protein] = an N-terminal L-phenylalanyl-L-alpha-aminoacyl-[protein] + tRNA(Phe). Functions in the N-end rule pathway of protein degradation where it conjugates Leu, Phe and, less efficiently, Met from aminoacyl-tRNAs to the N-termini of proteins containing an N-terminal arginine or lysine. The polypeptide is Leucyl/phenylalanyl-tRNA--protein transferase (Syntrophotalea carbinolica (strain DSM 2380 / NBRC 103641 / GraBd1) (Pelobacter carbinolicus)).